The primary structure comprises 627 residues: Spindle assembly abnormal protein 6 homolog (627 aa).

The 53-residue stretch at 39-91 (VHRKDLVVRLTDDTDLYFLYNLIISEEDFQSLKVQQGLLIDFTSFPQKFIDLL) folds into the PISA domain. Residues 153–473 (LASCLSSVKE…SREVLKTNEN (321 aa)) are a coiled coil. Disordered regions lie at residues 187–257 (QTLS…LQTK) and 561–586 (EVSP…SKYF). The span at 191–201 (EKSRELDKLRS) shows a compositional bias: basic and acidic residues. Polar residues predominate over residues 202–213 (EWTSQTTSLSSR). Basic and acidic residues predominate over residues 214-226 (HMQDLTAEREKAL). A compositionally biased stretch (low complexity) spans 229–238 (QSRLQQQNEQ).

In terms of assembly, nine homodimers form a cartwheel structure with an internal diameter of 23 nM and radial spokes connecting to the microtubule triplets.

It is found in the cytoplasm. It localises to the cytoskeleton. The protein localises to the microtubule organizing center. The protein resides in the centrosome. In terms of biological role, central scaffolding component of the centrioles ensuring their 9-fold symmetry. Required for centrosome biogenesis and duplication: required both for mother-centriole-dependent centriole duplication and deuterosome-dependent centriole amplification in multiciliated cells. This Danio rerio (Zebrafish) protein is Spindle assembly abnormal protein 6 homolog (sass6).